The following is a 278-amino-acid chain: Octanoyl-[GcvH]:protein N-octanoyltransferase (278 aa).

Positions 41–247 (DISDNVVRTW…AIKDLGGVLN (207 aa)) constitute a BPL/LPL catalytic domain. The Acyl-thioester intermediate role is filled by C146.

Belongs to the octanoyltransferase LipL family.

It carries out the reaction N(6)-octanoyl-L-lysyl-[glycine-cleavage complex H protein] + L-lysyl-[lipoyl-carrier protein] = N(6)-octanoyl-L-lysyl-[lipoyl-carrier protein] + L-lysyl-[glycine-cleavage complex H protein]. It participates in protein modification; protein lipoylation via endogenous pathway; protein N(6)-(lipoyl)lysine from octanoyl-[acyl-carrier-protein]. Catalyzes the amidotransfer (transamidation) of the octanoyl moiety from octanoyl-GcvH to the lipoyl domain of the E2 subunit of lipoate-dependent enzymes. In Staphylococcus aureus (strain NCTC 8325 / PS 47), this protein is Octanoyl-[GcvH]:protein N-octanoyltransferase.